A 328-amino-acid chain; its full sequence is Glyoxylate reductase/hydroxypyruvate reductase (328 aa).

Residue serine 36 is modified to Phosphoserine. 83–84 (VG) contributes to the substrate binding site. NADP(+)-binding positions include 162 to 164 (GRI), 185 to 188 (RQPR), serine 217, and isoleucine 243. Substrate contacts are provided by arginine 245 and aspartate 269. Residue serine 272 is modified to Phosphoserine. Histidine 293 functions as the Proton donor in the catalytic mechanism. 293–296 (HIGS) is a substrate binding site. NADP(+) is bound at residue glycine 295. At threonine 298 the chain carries Phosphothreonine.

It belongs to the D-isomer specific 2-hydroxyacid dehydrogenase family. In terms of assembly, homodimer. In terms of tissue distribution, ubiquitous. Most abundantly expressed in the liver.

It carries out the reaction glycolate + NADP(+) = glyoxylate + NADPH + H(+). The enzyme catalyses (R)-glycerate + NAD(+) = 3-hydroxypyruvate + NADH + H(+). It catalyses the reaction (R)-glycerate + NADP(+) = 3-hydroxypyruvate + NADPH + H(+). Its function is as follows. Enzyme with hydroxy-pyruvate reductase, glyoxylate reductase and D-glycerate dehydrogenase enzymatic activities. Reduces hydroxypyruvate to D-glycerate, glyoxylate to glycolate, oxidizes D-glycerate to hydroxypyruvate. In Homo sapiens (Human), this protein is Glyoxylate reductase/hydroxypyruvate reductase (GRHPR).